Reading from the N-terminus, the 34-residue chain is Photosystem II reaction center protein M (34 aa).

The chain crosses the membrane as a helical span at residues 5-25 (ILAFIATTLFVLVPTAFLLII).

The protein belongs to the PsbM family. As to quaternary structure, PSII is composed of 1 copy each of membrane proteins PsbA, PsbB, PsbC, PsbD, PsbE, PsbF, PsbH, PsbI, PsbJ, PsbK, PsbL, PsbM, PsbT, PsbX, PsbY, PsbZ, Psb30/Ycf12, at least 3 peripheral proteins of the oxygen-evolving complex and a large number of cofactors. It forms dimeric complexes.

The protein localises to the plastid. The protein resides in the chloroplast thylakoid membrane. One of the components of the core complex of photosystem II (PSII). PSII is a light-driven water:plastoquinone oxidoreductase that uses light energy to abstract electrons from H(2)O, generating O(2) and a proton gradient subsequently used for ATP formation. It consists of a core antenna complex that captures photons, and an electron transfer chain that converts photonic excitation into a charge separation. This subunit is found at the monomer-monomer interface. The protein is Photosystem II reaction center protein M of Citrus sinensis (Sweet orange).